A 206-amino-acid polypeptide reads, in one-letter code: Thiamine-phosphate synthase (206 aa).

4-amino-2-methyl-5-(diphosphooxymethyl)pyrimidine-binding positions include 35–39 and asparagine 67; that span reads QLRHK. Mg(2+) is bound by residues aspartate 68 and aspartate 87. Serine 106 is a binding site for 4-amino-2-methyl-5-(diphosphooxymethyl)pyrimidine. 132–134 is a binding site for 2-[(2R,5Z)-2-carboxy-4-methylthiazol-5(2H)-ylidene]ethyl phosphate; the sequence is TGS. Lysine 135 provides a ligand contact to 4-amino-2-methyl-5-(diphosphooxymethyl)pyrimidine. A 2-[(2R,5Z)-2-carboxy-4-methylthiazol-5(2H)-ylidene]ethyl phosphate-binding site is contributed by glycine 163.

Belongs to the thiamine-phosphate synthase family. Mg(2+) serves as cofactor.

It carries out the reaction 2-[(2R,5Z)-2-carboxy-4-methylthiazol-5(2H)-ylidene]ethyl phosphate + 4-amino-2-methyl-5-(diphosphooxymethyl)pyrimidine + 2 H(+) = thiamine phosphate + CO2 + diphosphate. The catalysed reaction is 2-(2-carboxy-4-methylthiazol-5-yl)ethyl phosphate + 4-amino-2-methyl-5-(diphosphooxymethyl)pyrimidine + 2 H(+) = thiamine phosphate + CO2 + diphosphate. It catalyses the reaction 4-methyl-5-(2-phosphooxyethyl)-thiazole + 4-amino-2-methyl-5-(diphosphooxymethyl)pyrimidine + H(+) = thiamine phosphate + diphosphate. Its pathway is cofactor biosynthesis; thiamine diphosphate biosynthesis; thiamine phosphate from 4-amino-2-methyl-5-diphosphomethylpyrimidine and 4-methyl-5-(2-phosphoethyl)-thiazole: step 1/1. In terms of biological role, condenses 4-methyl-5-(beta-hydroxyethyl)thiazole monophosphate (THZ-P) and 2-methyl-4-amino-5-hydroxymethyl pyrimidine pyrophosphate (HMP-PP) to form thiamine monophosphate (TMP). This Chlorobium phaeobacteroides (strain DSM 266 / SMG 266 / 2430) protein is Thiamine-phosphate synthase.